The following is a 313-amino-acid chain: Formate-nitrite transporter (313 aa).

At methionine 1–alanine 47 the chain is on the cytoplasmic side. The helical transmembrane segment at isoleucine 48–phenylalanine 68 threads the bilayer. Residues tyrosine 69–valine 77 are Extracellular-facing. The chain crosses the membrane as a helical span at residues glycine 78 to isoleucine 98. Over cysteine 99–arginine 128 the chain is Cytoplasmic. A helical transmembrane segment spans residues valine 129 to serine 149. Over tyrosine 150–cysteine 185 the chain is Extracellular. A glycan (N-linked (GlcNAc...) asparagine) is linked at asparagine 179. The helical transmembrane segment at isoleucine 186 to isoleucine 206 threads the bilayer. Topologically, residues lysine 207–glycine 211 are cytoplasmic. A helical membrane pass occupies residues methionine 212 to isoleucine 232. The Extracellular portion of the chain corresponds to alanine 233–proline 260. Asparagine 239 carries N-linked (GlcNAc...) asparagine glycosylation. The helical transmembrane segment at threonine 261–tyrosine 281 threads the bilayer. Residues arginine 282–threonine 313 are Cytoplasmic-facing.

This sequence belongs to the FNT transporter (TC 1.A.16) family. As to quaternary structure, homopentamer.

The protein resides in the cell membrane. The protein localises to the vacuole membrane. It carries out the reaction (S)-lactate(in) + H(+)(in) = (S)-lactate(out) + H(+)(out). The enzyme catalyses formate(in) + H(+)(in) = formate(out) + H(+)(out). It catalyses the reaction pyruvate(out) + H(+)(out) = pyruvate(in) + H(+)(in). The catalysed reaction is acetate(out) + H(+)(out) = acetate(in) + H(+)(in). Inhibited by the Malaria Box compound MMV007839 and its derivatives BH296 and BH267.meta. Its function is as follows. Monocarboxylate-proton symporter that mediates the efflux of the waste product lactate in the intraerythrocytic parasites; active in acidic-to-neutral pH range. Transports L-lactate. The polypeptide is Formate-nitrite transporter (Plasmodium ovale).